The primary structure comprises 72 residues: Translation initiation factor IF-1 (72 aa).

The S1-like domain maps to 1–72 (MAKDDVIEVD…DKGRITFRYK (72 aa)).

It belongs to the IF-1 family. Component of the 30S ribosomal translation pre-initiation complex which assembles on the 30S ribosome in the order IF-2 and IF-3, IF-1 and N-formylmethionyl-tRNA(fMet); mRNA recruitment can occur at any time during PIC assembly.

It is found in the cytoplasm. Its function is as follows. One of the essential components for the initiation of protein synthesis. Stabilizes the binding of IF-2 and IF-3 on the 30S subunit to which N-formylmethionyl-tRNA(fMet) subsequently binds. Helps modulate mRNA selection, yielding the 30S pre-initiation complex (PIC). Upon addition of the 50S ribosomal subunit IF-1, IF-2 and IF-3 are released leaving the mature 70S translation initiation complex. This chain is Translation initiation factor IF-1, found in Nitratiruptor sp. (strain SB155-2).